The primary structure comprises 334 residues: Phenazine-1-carboxylate N-methyltransferase (334 aa).

Residues D198 and R241 each coordinate S-adenosyl-L-methionine.

It belongs to the class I-like SAM-binding methyltransferase superfamily. Cation-independent O-methyltransferase family. In terms of assembly, homodimer in solution. Probably interacts transiently with PhzS.

It carries out the reaction phenazine-1-carboxylate + S-adenosyl-L-methionine = 5-methyl-phenazine-1-carboxylate + S-adenosyl-L-homocysteine. It functions in the pathway secondary metabolite biosynthesis; pyocyanine biosynthesis. In vitro, requires PhzS for activity. Functionally, involved in the biosynthesis of pyocyanine, a blue-pigmented phenazine derivative, which plays a role in virulence. Converts phenazine-1-carboxylate (PCA) to 5-methylphenazine-1-carboxylate (5-methyl-PCA). In Pseudomonas aeruginosa (strain ATCC 15692 / DSM 22644 / CIP 104116 / JCM 14847 / LMG 12228 / 1C / PRS 101 / PAO1), this protein is Phenazine-1-carboxylate N-methyltransferase.